Here is a 262-residue protein sequence, read N- to C-terminus: Proteasome subunit alpha (262 aa).

The interval 235 to 262 is disordered; that stretch reads LLPTTGESDAGDSGADGSPSGDSPDTSA.

This sequence belongs to the peptidase T1A family. In terms of assembly, the 20S proteasome core is composed of 14 alpha and 14 beta subunits that assemble into four stacked heptameric rings, resulting in a barrel-shaped structure. The two inner rings, each composed of seven catalytic beta subunits, are sandwiched by two outer rings, each composed of seven alpha subunits. The catalytic chamber with the active sites is on the inside of the barrel. Has a gated structure, the ends of the cylinder being occluded by the N-termini of the alpha-subunits. Is capped by the proteasome-associated ATPase, ARC.

The protein localises to the cytoplasm. It participates in protein degradation; proteasomal Pup-dependent pathway. The formation of the proteasomal ATPase ARC-20S proteasome complex, likely via the docking of the C-termini of ARC into the intersubunit pockets in the alpha-rings, may trigger opening of the gate for substrate entry. Interconversion between the open-gate and close-gate conformations leads to a dynamic regulation of the 20S proteasome proteolysis activity. In terms of biological role, component of the proteasome core, a large protease complex with broad specificity involved in protein degradation. In Gordonia bronchialis (strain ATCC 25592 / DSM 43247 / BCRC 13721 / JCM 3198 / KCTC 3076 / NBRC 16047 / NCTC 10667) (Rhodococcus bronchialis), this protein is Proteasome subunit alpha.